A 141-amino-acid polypeptide reads, in one-letter code: Hemoglobin subunit alpha (141 aa).

A Globin domain is found at 1–141; sequence VLSGTDKSNI…VSTVLTSKYR (141 aa). Ser-3 is modified (phosphoserine). N6-succinyllysine occurs at positions 7 and 11. An N6-acetyllysine; alternate modification is found at Lys-16. An N6-succinyllysine; alternate modification is found at Lys-16. Position 24 is a phosphotyrosine (Tyr-24). Ser-35 carries the post-translational modification Phosphoserine. The residue at position 40 (Lys-40) is an N6-succinyllysine. Ser-49 carries the phosphoserine modification. His-58 provides a ligand contact to O2. His-87 contributes to the heme b binding site. Ser-102 bears the Phosphoserine mark. At Thr-108 the chain carries Phosphothreonine. Ser-124 is modified (phosphoserine). A phosphothreonine mark is found at Thr-134 and Thr-137. Ser-138 bears the Phosphoserine mark.

This sequence belongs to the globin family. As to quaternary structure, heterotetramer of two alpha chains and two beta chains. As to expression, red blood cells.

Functionally, involved in oxygen transport from the lung to the various peripheral tissues. In terms of biological role, hemopressin acts as an antagonist peptide of the cannabinoid receptor CNR1. Hemopressin-binding efficiently blocks cannabinoid receptor CNR1 and subsequent signaling. This is Hemoglobin subunit alpha (HBA) from Talpa europaea (European mole).